The following is a 350-amino-acid chain: UDP-3-O-acylglucosamine N-acyltransferase (350 aa).

The active-site Proton acceptor is the histidine 257.

This sequence belongs to the transferase hexapeptide repeat family. LpxD subfamily. Homotrimer.

It carries out the reaction a UDP-3-O-[(3R)-3-hydroxyacyl]-alpha-D-glucosamine + a (3R)-hydroxyacyl-[ACP] = a UDP-2-N,3-O-bis[(3R)-3-hydroxyacyl]-alpha-D-glucosamine + holo-[ACP] + H(+). It functions in the pathway bacterial outer membrane biogenesis; LPS lipid A biosynthesis. Its function is as follows. Catalyzes the N-acylation of UDP-3-O-acylglucosamine using 3-hydroxyacyl-ACP as the acyl donor. Is involved in the biosynthesis of lipid A, a phosphorylated glycolipid that anchors the lipopolysaccharide to the outer membrane of the cell. The sequence is that of UDP-3-O-acylglucosamine N-acyltransferase from Chelativorans sp. (strain BNC1).